The sequence spans 143 residues: Small ribosomal subunit protein uS11c (143 aa).

The protein belongs to the universal ribosomal protein uS11 family. Part of the 30S ribosomal subunit.

It localises to the plastid. Its subcellular location is the chloroplast. This Saccharum officinarum (Sugarcane) protein is Small ribosomal subunit protein uS11c.